The sequence spans 152 residues: MNSKVVIYTDGACAGNPGPGGWGALLKFNDASKEIFGYELDTTNNRMEITAAFEALKILKKSCNVEIYTDSKYLQQGITAWIHNWIKNNWCKSNNEPVKNADLWQKLYAELSKHTIIWKWVKGHANNSGNIAADKLAVQGRETAIEVLKCRG.

The 142-residue stretch at 1–142 folds into the RNase H type-1 domain; that stretch reads MNSKVVIYTD…ADKLAVQGRE (142 aa). Mg(2+) is bound by residues D10, E48, D70, and D134.

This sequence belongs to the RNase H family. As to quaternary structure, monomer. Requires Mg(2+) as cofactor.

It localises to the cytoplasm. The enzyme catalyses Endonucleolytic cleavage to 5'-phosphomonoester.. Functionally, endonuclease that specifically degrades the RNA of RNA-DNA hybrids. This chain is Ribonuclease H, found in Rickettsia akari (strain Hartford).